Reading from the N-terminus, the 424-residue chain is Serine--tRNA ligase (424 aa).

231–233 contacts L-serine; sequence TAE. Position 262–264 (262–264) interacts with ATP; it reads RSE. Glu-285 serves as a coordination point for L-serine. 349–352 lines the ATP pocket; the sequence is EISS. Residue Ser-385 coordinates L-serine.

It belongs to the class-II aminoacyl-tRNA synthetase family. Type-1 seryl-tRNA synthetase subfamily. As to quaternary structure, homodimer. The tRNA molecule binds across the dimer.

It is found in the cytoplasm. The catalysed reaction is tRNA(Ser) + L-serine + ATP = L-seryl-tRNA(Ser) + AMP + diphosphate + H(+). The enzyme catalyses tRNA(Sec) + L-serine + ATP = L-seryl-tRNA(Sec) + AMP + diphosphate + H(+). It functions in the pathway aminoacyl-tRNA biosynthesis; selenocysteinyl-tRNA(Sec) biosynthesis; L-seryl-tRNA(Sec) from L-serine and tRNA(Sec): step 1/1. Its function is as follows. Catalyzes the attachment of serine to tRNA(Ser). Is also able to aminoacylate tRNA(Sec) with serine, to form the misacylated tRNA L-seryl-tRNA(Sec), which will be further converted into selenocysteinyl-tRNA(Sec). The polypeptide is Serine--tRNA ligase (Bacillus cereus (strain AH187)).